The sequence spans 309 residues: tRNA uridine(34) hydroxylase (309 aa).

One can recognise a Rhodanese domain in the interval 130-224; it reads SDPDTIVIDT…YLEEVPQEES (95 aa). C184 acts as the Cysteine persulfide intermediate in catalysis.

It belongs to the TrhO family.

The enzyme catalyses uridine(34) in tRNA + AH2 + O2 = 5-hydroxyuridine(34) in tRNA + A + H2O. Functionally, catalyzes oxygen-dependent 5-hydroxyuridine (ho5U) modification at position 34 in tRNAs. This chain is tRNA uridine(34) hydroxylase, found in Rhizobium leguminosarum bv. trifolii (strain WSM2304).